Here is a 220-residue protein sequence, read N- to C-terminus: uncharacterized protein (220 aa).

Residues 194-220 (DQSQQQATKSNSKTKKLKGNHGEKTKI) form a disordered region. Positions 195–204 (QSQQQATKSN) are enriched in polar residues.

This is an uncharacterized protein from Borreliella burgdorferi (strain ATCC 35210 / DSM 4680 / CIP 102532 / B31) (Borrelia burgdorferi).